The following is a 419-amino-acid chain: Histidine--tRNA ligase (419 aa).

It belongs to the class-II aminoacyl-tRNA synthetase family. Homodimer.

It localises to the cytoplasm. The catalysed reaction is tRNA(His) + L-histidine + ATP = L-histidyl-tRNA(His) + AMP + diphosphate + H(+). This chain is Histidine--tRNA ligase, found in Desulfatibacillum aliphaticivorans.